Reading from the N-terminus, the 1361-residue chain is Rho guanine nucleotide exchange factor 18 (1361 aa).

3 disordered regions span residues 33-88 (LQDL…SCSE), 131-156 (SGGG…SRSV), and 244-292 (DGAG…ARER). Basic and acidic residues predominate over residues 50 to 61 (PDSRPTGEEPGR). Polar residues predominate over residues 64 to 73 (LFSSLAGSQD). The span at 74-88 (LSRRRSWERSRSCSE) shows a compositional bias: basic and acidic residues. Composition is skewed to basic and acidic residues over residues 245-256 (GAGKNEKSDKST) and 271-292 (RQKE…ARER). A C2H2-type; degenerate zinc finger spans residues 310–334 (SSCPLCGKPFLSSASLKEHPRGTLL). The tract at residues 348 to 368 (TVSQKGGPQPTPSPAGPGTQL) is disordered. The DH domain occupies 447 to 644 (KRQDVLYELM…KDIISQVDAK (198 aa)). One can recognise a PH domain in the interval 684 to 786 (QLHLEGMLCW…WMAHIQRAVE (103 aa)). Disordered regions lie at residues 893-980 (ANGQ…DPRL), 1143-1211 (LKKQ…RLAK), 1229-1264 (AAVQ…SSAS), and 1277-1361 (MGKD…VIFF). Thr912 carries the phosphothreonine modification. A Phosphoserine modification is found at Ser921. Positions 1038–1148 (LEQERQRNFE…LLRRLKKQNT (111 aa)) form a coiled coil. Basic and acidic residues predominate over residues 1191-1211 (YAERPEVARRDSAPTENRLAK). Positions 1254–1264 (RGSQRWESSAS) are enriched in polar residues. A phosphoserine mark is found at Ser1289 and Ser1291. Composition is skewed to pro residues over residues 1300–1317 (PAPP…PPAD) and 1334–1344 (PGPPAPSPLPA). Residues 1349–1361 (AKEDASKEDVIFF) are compositionally biased toward basic and acidic residues.

As to quaternary structure, interacts with SEPT9; the interaction may inhibit GEF activity. Interacts with Gbetagamma subunits GNB1 and GNG2. Interacts with EPB41L4B. Interacts with PATJ (via C-terminus). As to expression, expressed in all tissues tested with highest expression in kidney and pancreas. Weakly or not expressed in liver, skeletal muscle and testis. Isoform 1: Expressed in eosinophils. Isoform 2: Expressed in eosinophils. Isoform 3: Expressed in eosinophils. Isoform 4: Not detected in eosinophils.

The protein resides in the cytoplasm. It is found in the cytoskeleton. It localises to the cell membrane. The protein localises to the apical cell membrane. In terms of biological role, acts as a guanine nucleotide exchange factor (GEF) for RhoA GTPases. Its activation induces formation of actin stress fibers. Also acts as a GEF for RAC1, inducing production of reactive oxygen species (ROS). Does not act as a GEF for CDC42. The G protein beta-gamma (Gbetagamma) subunits of heterotrimeric G proteins act as activators, explaining the integrated effects of LPA and other G-protein coupled receptor agonists on actin stress fiber formation, cell shape change and ROS production. Required for EPB41L4B-mediated regulation of the circumferential actomyosin belt in epithelial cells. This is Rho guanine nucleotide exchange factor 18 (ARHGEF18) from Homo sapiens (Human).